The primary structure comprises 146 residues: Horcolin (146 aa).

Positions 1-21 (MSKPVKIGPWGGNGGSERDVQ) are disordered. The Jacalin-type lectin domain occupies 4–146 (PVKIGPWGGN…LDAIGFYITP (143 aa)).

This sequence belongs to the jacalin lectin family.

Its subcellular location is the secreted. It localises to the extracellular space. The protein localises to the apoplast. Mannose-specific lectin. Has a weak agglutinating activity against rabbit erythrocytes. The polypeptide is Horcolin (Hordeum vulgare (Barley)).